Consider the following 273-residue polypeptide: Ribosomal protein L11 methyltransferase (273 aa).

Residues Thr-112, Gly-133, Asp-155, and Asn-203 each contribute to the S-adenosyl-L-methionine site.

This sequence belongs to the methyltransferase superfamily. PrmA family.

Its subcellular location is the cytoplasm. It carries out the reaction L-lysyl-[protein] + 3 S-adenosyl-L-methionine = N(6),N(6),N(6)-trimethyl-L-lysyl-[protein] + 3 S-adenosyl-L-homocysteine + 3 H(+). Functionally, methylates ribosomal protein L11. The protein is Ribosomal protein L11 methyltransferase of Deinococcus radiodurans (strain ATCC 13939 / DSM 20539 / JCM 16871 / CCUG 27074 / LMG 4051 / NBRC 15346 / NCIMB 9279 / VKM B-1422 / R1).